The sequence spans 109 residues: Cortistatin (109 aa).

The N-terminal stretch at 1 to 25 (MMGGRGTGGKWPSAFGLLLLWGVAA) is a signal peptide. The propeptide occupies 26-93 (SALPLESGPT…PPPQQPPHLD (68 aa)). Residues 64 to 97 (ASSSTPVGGGTPGLSKSQERPPPQQPPHLDKKPC) form a disordered region. Cysteines 97 and 108 form a disulfide.

It belongs to the somatostatin family. As to expression, expressed in a subset of GABAergic cells in the cortex and hippocampus.

It localises to the secreted. This Mus musculus (Mouse) protein is Cortistatin (Cort).